A 433-amino-acid polypeptide reads, in one-letter code: Inward rectifier potassium channel 18 (433 aa).

Over 1–77 (MTAASRANPY…LADMFTTCVD (77 aa)) the chain is Cytoplasmic. A helical transmembrane segment spans residues 78–104 (IRWRYMLLIFSLAFLASWLLFGVIFWV). The Extracellular portion of the chain corresponds to 105-129 (IAVAHGDLEPAEGHGRTPCVMQVHG). Positions 130-146 (FMAAFLFSIETQTTIGY) form an intramembrane region, helical; Pore-forming. Residues 143-148 (TIGYGL) carry the Selectivity filter motif. At 147–155 (GLRCVTEEC) the chain is on the extracellular side. A helical transmembrane segment spans residues 156 to 183 (LVAVFMVVAQSIVGCIIDSFMIGAIMAK). Topologically, residues 184-433 (MARPKKRAQT…QRPYRRGSEI (250 aa)) are cytoplasmic. The tract at residues 387-433 (DEEDEADGDQDGRSRDGLSPQARHDFDRLQAGGGVLEQRPYRRGSEI) is disordered. The span at 396–414 (QDGRSRDGLSPQARHDFDR) shows a compositional bias: basic and acidic residues.

Belongs to the inward rectifier-type potassium channel (TC 1.A.2.1) family. KCNJ12 subfamily. In terms of assembly, can form heteromeric channels with Kir2.1/KCNJ2. Can form heteromeric channels with Kir2.2/KCNJ12. Probably phosphorylated by PKC; decreases single-channel open probability. Specifically expressed in skeletal muscle.

The protein localises to the cell membrane. The protein resides in the endoplasmic reticulum. It catalyses the reaction K(+)(in) = K(+)(out). Inward rectifier potassium channels are characterized by a greater tendency to allow potassium to flow into the cell rather than out of it. Their voltage dependence is regulated by the concentration of extracellular potassium; as external potassium is raised, the voltage range of the channel opening shifts to more positive voltages. The inward rectification is mainly due to the blockage of outward current by internal magnesium. This is Inward rectifier potassium channel 18 (KCNJ18) from Homo sapiens (Human).